A 688-amino-acid chain; its full sequence is PR domain zinc finger protein 8 (688 aa).

In terms of domain architecture, SET spans 16-131 (KAVQQCLTDI…KDEELLVWYG (116 aa)). An S-adenosyl-L-methionine-binding site is contributed by tyrosine 130. A C2H2-type 1 zinc finger spans residues 154–182 (YTCLECSQRFQFEFPYVAHLRFRCPKRLH). Disordered regions lie at residues 184-309 (TDAN…GCKG) and 397-506 (EEAA…PARS). Residues 192–208 (QGGGLGTKDHGGGGGGK) are compositionally biased toward gly residues. 2 stretches are compositionally biased toward low complexity: residues 209–219 (EQQQQQQQQQQ) and 275–284 (GSSSCVAAPG). 2 stretches are compositionally biased toward gly residues: residues 414–424 (AGGGVAGGGSN) and 470–489 (LGGG…GGGQ). C2H2-type zinc fingers lie at residues 624–647 (NWCA…RSHH) and 665–687 (LKCP…MTSH).

Belongs to the class V-like SAM-binding methyltransferase superfamily. In terms of assembly, interacts with BHLHE22. Interacts with EPM2A and NHLRC1. This interaction sequesters EPM2A and NHLRC1 to the nucleus. Expressed in brain, heart, liver, testes, retina. Highest expression is observed in the retina and hippocampus; moderately expressed in the cortex and cerebellum. In the retina, it is expressed in bipolar and amacrine cells.

It localises to the nucleus. In terms of biological role, probable histone methyltransferase, preferentially acting on 'Lys-9' of histone H3. Histone methyltransferase activity has not been confirmed in other species. Involved in the control of steroidogenesis through transcriptional repression of steroidogenesis marker genes such as CYP17A1 and LHCGR. Forms with BHLHE22 a transcriptional repressor complex controlling genes involved in neural development and neuronal differentiation. In the retina, it is required for rod bipolar and type 2 OFF-cone bipolar cell survival. The chain is PR domain zinc finger protein 8 (Prdm8) from Mus musculus (Mouse).